Here is a 278-residue protein sequence, read N- to C-terminus: Energy-coupling factor transporter ATP-binding protein EcfA1 (278 aa).

Residues 5–239 form the ABC transporter domain; that stretch reads IRVQHLNYTY…GMELLRLGLD (235 aa). ATP is bound at residue 39-46; it reads GHNGSGKS. The active-site Proton acceptor is the Glu165.

It belongs to the ABC transporter superfamily. Energy-coupling factor EcfA family. As to quaternary structure, forms a stable energy-coupling factor (ECF) transporter complex probably composed of 2 membrane-embedded substrate-binding proteins (S component), 2 ATP-binding proteins (A component) and 2 transmembrane proteins (T component). This complex interacts with a number of substrate-specific components, including FolT and ThiT for 5-formyltetrahydrofolate and thiamine respectively.

It is found in the cell membrane. Its function is as follows. ATP-binding (A) component of a common energy-coupling factor (ECF) ABC-transporter complex. Unlike classic ABC transporters this ECF transporter provides the energy necessary to transport a number of different substrates including 5-formyltetrahydrofolate and thiamine. Expression of the complex plus FolT or ThiT in Lactococcus lactis subsp. cremoris (strain NZ9000) allows 5-formyltetrahydrofolate or thiamine uptake respectively; 5-formyltetrahydrofolate or thiamine are not taken up in the absence of FolT/ThiT or the EcfA1A2T complex. Deenergized L.lactis subsp. cremoris (treated with 2-deoxyglucose) does not take up substrate. The chain is Energy-coupling factor transporter ATP-binding protein EcfA1 from Lacticaseibacillus paracasei (strain ATCC 334 / BCRC 17002 / CCUG 31169 / CIP 107868 / KCTC 3260 / NRRL B-441) (Lactobacillus paracasei).